The chain runs to 175 residues: NAD(P)H-quinone oxidoreductase subunit J (175 aa).

This sequence belongs to the complex I 30 kDa subunit family. As to quaternary structure, NDH-1 can be composed of about 15 different subunits; different subcomplexes with different compositions have been identified which probably have different functions.

The protein localises to the cellular thylakoid membrane. The catalysed reaction is a plastoquinone + NADH + (n+1) H(+)(in) = a plastoquinol + NAD(+) + n H(+)(out). It catalyses the reaction a plastoquinone + NADPH + (n+1) H(+)(in) = a plastoquinol + NADP(+) + n H(+)(out). Functionally, NDH-1 shuttles electrons from an unknown electron donor, via FMN and iron-sulfur (Fe-S) centers, to quinones in the respiratory and/or the photosynthetic chain. The immediate electron acceptor for the enzyme in this species is believed to be plastoquinone. Couples the redox reaction to proton translocation, and thus conserves the redox energy in a proton gradient. Cyanobacterial NDH-1 also plays a role in inorganic carbon-concentration. The sequence is that of NAD(P)H-quinone oxidoreductase subunit J from Trichormus variabilis (strain ATCC 29413 / PCC 7937) (Anabaena variabilis).